The sequence spans 483 residues: Glutamyl-tRNA(Gln) amidotransferase subunit A (483 aa).

Active-site charge relay system residues include K77 and S152. Residue S176 is the Acyl-ester intermediate of the active site.

It belongs to the amidase family. GatA subfamily. Heterotrimer of A, B and C subunits.

The enzyme catalyses L-glutamyl-tRNA(Gln) + L-glutamine + ATP + H2O = L-glutaminyl-tRNA(Gln) + L-glutamate + ADP + phosphate + H(+). Its function is as follows. Allows the formation of correctly charged Gln-tRNA(Gln) through the transamidation of misacylated Glu-tRNA(Gln) in organisms which lack glutaminyl-tRNA synthetase. The reaction takes place in the presence of glutamine and ATP through an activated gamma-phospho-Glu-tRNA(Gln). The protein is Glutamyl-tRNA(Gln) amidotransferase subunit A of Listeria monocytogenes serotype 4a (strain HCC23).